Here is a 356-residue protein sequence, read N- to C-terminus: Vacuolar protein sorting-associated protein 26 (356 aa).

The segment at 301–356 (MRRPGTEDDEEEKQTTSIPGTQKFTAPAPVEHPKPESPRSDPKSGSTSPDDNSDSS) is disordered. Positions 315 to 324 (TTSIPGTQKF) are enriched in polar residues. A compositionally biased stretch (basic and acidic residues) spans 331–342 (EHPKPESPRSDP).

The protein belongs to the VPS26 family.

May play a role in vesicular protein sorting, similar to the yeast retromer proteins. This is Vacuolar protein sorting-associated protein 26 (vps-26) from Caenorhabditis elegans.